The following is a 224-amino-acid chain: Small ribosomal subunit protein uS3 (224 aa).

The 69-residue stretch at 38-106 folds into the KH type-2 domain; the sequence is LREFVKEKLG…EVYLNVVEVR (69 aa).

It belongs to the universal ribosomal protein uS3 family. In terms of assembly, part of the 30S ribosomal subunit. Forms a tight complex with proteins S10 and S14.

In terms of biological role, binds the lower part of the 30S subunit head. Binds mRNA in the 70S ribosome, positioning it for translation. The protein is Small ribosomal subunit protein uS3 of Anaeromyxobacter dehalogenans (strain 2CP-1 / ATCC BAA-258).